A 109-amino-acid chain; its full sequence is Nucleoid-associated protein LJ_0424 (109 aa).

It belongs to the YbaB/EbfC family. In terms of assembly, homodimer.

The protein localises to the cytoplasm. Its subcellular location is the nucleoid. Functionally, binds to DNA and alters its conformation. May be involved in regulation of gene expression, nucleoid organization and DNA protection. The polypeptide is Nucleoid-associated protein LJ_0424 (Lactobacillus johnsonii (strain CNCM I-12250 / La1 / NCC 533)).